We begin with the raw amino-acid sequence, 212 residues long: Thymidylate kinase (212 aa).

7 to 14 (GIEGCGKS) contributes to the ATP binding site.

It belongs to the thymidylate kinase family.

It carries out the reaction dTMP + ATP = dTDP + ADP. Phosphorylation of dTMP to form dTDP in both de novo and salvage pathways of dTTP synthesis. In Trichlorobacter lovleyi (strain ATCC BAA-1151 / DSM 17278 / SZ) (Geobacter lovleyi), this protein is Thymidylate kinase.